The following is a 778-amino-acid chain: Putative ATP-dependent RNA helicase MJ1505 (778 aa).

Residues 22–186 (IAANALKKKT…EICENLGIEH (165 aa)) enclose the Helicase ATP-binding domain. 35 to 42 (LSTGLGKT) serves as a coordination point for ATP. The short motif at 137 to 140 (DEAH) is the DEAH box element. The region spanning 338 to 516 (KVVDMVKNIL…EIKEETEEIK (179 aa)) is the Helicase C-terminal domain.

It belongs to the DEAD box helicase family. DEAH subfamily.

The enzyme catalyses ATP + H2O = ADP + phosphate + H(+). This is Putative ATP-dependent RNA helicase MJ1505 from Methanocaldococcus jannaschii (strain ATCC 43067 / DSM 2661 / JAL-1 / JCM 10045 / NBRC 100440) (Methanococcus jannaschii).